Here is a 371-residue protein sequence, read N- to C-terminus: Bifunctional enzyme IspD/IspF (371 aa).

A 2-C-methyl-D-erythritol 4-phosphate cytidylyltransferase region spans residues 1-212 (MLDISLIMLG…CLIPPSNEHF (212 aa)). The 2-C-methyl-D-erythritol 2,4-cyclodiphosphate synthase stretch occupies residues 212–371 (FTGIGFDAHE…ANLKYYDWTK (160 aa)). Residues Asp-218 and His-220 each coordinate a divalent metal cation. 4-CDP-2-C-methyl-D-erythritol 2-phosphate-binding positions include 218 to 220 (DAH) and 244 to 245 (HS). His-252 serves as a coordination point for a divalent metal cation. 4-CDP-2-C-methyl-D-erythritol 2-phosphate is bound by residues 266 to 268 (DIG), 271 to 275 (FPDTD), 342 to 345 (TTTE), Phe-349, and Arg-352.

This sequence in the N-terminal section; belongs to the IspD/TarI cytidylyltransferase family. IspD subfamily. In the C-terminal section; belongs to the IspF family. A divalent metal cation serves as cofactor.

The enzyme catalyses 2-C-methyl-D-erythritol 4-phosphate + CTP + H(+) = 4-CDP-2-C-methyl-D-erythritol + diphosphate. The catalysed reaction is 4-CDP-2-C-methyl-D-erythritol 2-phosphate = 2-C-methyl-D-erythritol 2,4-cyclic diphosphate + CMP. It functions in the pathway isoprenoid biosynthesis; isopentenyl diphosphate biosynthesis via DXP pathway; isopentenyl diphosphate from 1-deoxy-D-xylulose 5-phosphate: step 2/6. Its pathway is isoprenoid biosynthesis; isopentenyl diphosphate biosynthesis via DXP pathway; isopentenyl diphosphate from 1-deoxy-D-xylulose 5-phosphate: step 4/6. Its function is as follows. Bifunctional enzyme that catalyzes the formation of 4-diphosphocytidyl-2-C-methyl-D-erythritol from CTP and 2-C-methyl-D-erythritol 4-phosphate (MEP) (IspD), and catalyzes the conversion of 4-diphosphocytidyl-2-C-methyl-D-erythritol 2-phosphate (CDP-ME2P) to 2-C-methyl-D-erythritol 2,4-cyclodiphosphate (ME-CPP) with a corresponding release of cytidine 5-monophosphate (CMP) (IspF). The sequence is that of Bifunctional enzyme IspD/IspF from Campylobacter curvus (strain 525.92).